A 122-amino-acid polypeptide reads, in one-letter code: Large ribosomal subunit protein uL18 (122 aa).

The interval 1–26 (MSNLSRKQQTQKRHRRLRRHLKGTAQ) is disordered. Residues 9-22 (QTQKRHRRLRRHLK) show a composition bias toward basic residues.

This sequence belongs to the universal ribosomal protein uL18 family. As to quaternary structure, part of the 50S ribosomal subunit; part of the 5S rRNA/L5/L18/L25 subcomplex. Contacts the 5S and 23S rRNAs.

This is one of the proteins that bind and probably mediate the attachment of the 5S RNA into the large ribosomal subunit, where it forms part of the central protuberance. This Prochlorococcus marinus (strain MIT 9313) protein is Large ribosomal subunit protein uL18.